The chain runs to 185 residues: MSDDIKVLGISGSLRSGSYNSAALQEAIGLVPPGMSIELADISGIPLYNEDVYALGFPPAVERFREQIRAADALLFATPEYNYSMAGVLKNAIDWASRPPEQPFSGKPAAILGASAGRFGTARAQYHLRQTLVFLDVHPLNKPEVMISSAQNAFDAQGRLLDDKARELIQQQLQALQLWVRRLRG.

FMN is bound by residues 13 to 20 (SLRSGSYN) and 81 to 83 (YNY). Residue 115–122 (SAGRFGTA) coordinates NAD(+).

Belongs to the SsuE family. Homodimer. It depends on FMN as a cofactor.

Has NAD(P)H-dependent FMN reductase activity. This chain is NAD(P)H-dependent FMN reductase PA1204, found in Pseudomonas aeruginosa (strain ATCC 15692 / DSM 22644 / CIP 104116 / JCM 14847 / LMG 12228 / 1C / PRS 101 / PAO1).